We begin with the raw amino-acid sequence, 104 residues long: MSHTILLVQPGARPETRTYCDYESVNECMEGVCKIYEEHLKRRNPNTPTITYDISQLFDFIDTLIDISCLVYQKSTNTYAPYNKDWIKEKIYVLLRQAAFSPNA.

T18 carries the phosphothreonine; by CK2 modification. Residue S24 is modified to Phosphoserine; by CK2.

This sequence belongs to the E(R) family.

Acts as an enhancer of the rudimentary gene. Has a role in pyrimidine biosynthesis and the cell cycle. This is Protein enhancer of rudimentary (e(r)) from Drosophila virilis (Fruit fly).